The sequence spans 512 residues: MAIVSQISRFITFTIISMGYSVLAVGVALTIHILSQLIVPKNPNEPPNVFSLIPVLGNAVQFGMNPVAFLQECQKKYGDVFTFTMVGKRVTVCLGADGNQFVFNSKQNLSSAAEAYNHMTKYVFGPDVVYDAPHAVFMEQKKFIKAGLNSDCFRQHVPMIVQETEEFFKKFNKPTGFIEAYETFGSLIIYTASRCLMGKEIRASLDGNVAKLYYDLDQGFKPINFIFPNLPLPSYRRRDVACKKMADLYSSIIQRRKDEKDNNNADLLQALMDATYKDGTHIPDHHIAGMMIAVLFGGQHTSATTSAWTILELANRPDIIKALREEQIEKLGSLKADLTFDNLKDLPLLEAAIRETLRLHPPIFQMMRRVVADKIVYEKNGMEIPKGNFICAAPGVTQVDPTYFNEPTTYNPYRWIEKTDPVHQLEQGDDANIDYGFGAVGISSKSPFLPFGAGRHRCIGEQFGYLQLKTVISTFIRTFDFDLDGKSVPKSDYTSMVVVPEHTAKVRYTWRE.

A heme-binding site is contributed by Cys-458.

The protein belongs to the cytochrome P450 family. Heme serves as cofactor.

The protein localises to the membrane. The enzyme catalyses a 14alpha-methyl steroid + 3 reduced [NADPH--hemoprotein reductase] + 3 O2 = a Delta(14) steroid + formate + 3 oxidized [NADPH--hemoprotein reductase] + 4 H2O + 4 H(+). It catalyses the reaction a 14alpha-methyl steroid + reduced [NADPH--hemoprotein reductase] + O2 = a 14alpha-hydroxymethyl steroid + oxidized [NADPH--hemoprotein reductase] + H2O + H(+). It carries out the reaction a 14alpha-hydroxymethyl steroid + reduced [NADPH--hemoprotein reductase] + O2 = a 14alpha-formyl steroid + oxidized [NADPH--hemoprotein reductase] + 2 H2O + H(+). The catalysed reaction is a 14alpha-formyl steroid + reduced [NADPH--hemoprotein reductase] + O2 = a Delta(14) steroid + formate + oxidized [NADPH--hemoprotein reductase] + H2O + 2 H(+). The enzyme catalyses lanosterol + 3 reduced [NADPH--hemoprotein reductase] + 3 O2 = 4,4-dimethyl-5alpha-cholesta-8,14,24-trien-3beta-ol + formate + 3 oxidized [NADPH--hemoprotein reductase] + 4 H2O + 4 H(+). It catalyses the reaction lanosterol + reduced [NADPH--hemoprotein reductase] + O2 = 32-hydroxylanosterol + oxidized [NADPH--hemoprotein reductase] + H2O + H(+). It carries out the reaction 32-hydroxylanosterol + reduced [NADPH--hemoprotein reductase] + O2 = 32-oxolanosterol + oxidized [NADPH--hemoprotein reductase] + 2 H2O + H(+). The catalysed reaction is 32-oxolanosterol + reduced [NADPH--hemoprotein reductase] + O2 = 4,4-dimethyl-5alpha-cholesta-8,14,24-trien-3beta-ol + formate + oxidized [NADPH--hemoprotein reductase] + H2O + 2 H(+). The enzyme catalyses eburicol + 3 reduced [NADPH--hemoprotein reductase] + 3 O2 = 14-demethyleburicol + formate + 3 oxidized [NADPH--hemoprotein reductase] + 4 H2O + 4 H(+). It catalyses the reaction eburicol + reduced [NADPH--hemoprotein reductase] + O2 = 32-hydroxyeburicol + oxidized [NADPH--hemoprotein reductase] + H2O + H(+). It carries out the reaction 32-hydroxyeburicol + reduced [NADPH--hemoprotein reductase] + O2 = 32-oxoeburicol + oxidized [NADPH--hemoprotein reductase] + 2 H2O + H(+). The catalysed reaction is 32-oxoeburicol + reduced [NADPH--hemoprotein reductase] + O2 = 14-demethyleburicol + formate + oxidized [NADPH--hemoprotein reductase] + H2O + 2 H(+). It participates in steroid biosynthesis; zymosterol biosynthesis; zymosterol from lanosterol: step 1/6. Sterol 14alpha-demethylase that plays a critical role in the third module of ergosterol biosynthesis pathway, being ergosterol the major sterol component in fungal membranes that participates in a variety of functions. The third module or late pathway involves the ergosterol synthesis itself through consecutive reactions that mainly occur in the endoplasmic reticulum (ER) membrane. In filamentous fungi, during the initial step of this module, lanosterol (lanosta-8,24-dien-3beta-ol) can be metabolized to eburicol. Sterol 14alpha-demethylase catalyzes the three-step oxidative removal of the 14alpha-methyl group (C-32) of both these sterols in the form of formate, and converts eburicol and lanosterol to 14-demethyleburicol (4,4,24-trimethylergosta-8,14,24(28)-trienol) and 4,4-dimethyl-5alpha-cholesta-8,14,24-trien-3beta-ol, respectively, which are further metabolized by other enzymes in the pathway to ergosterol. Can also use substrates not intrinsic to fungi, such as 24,25-dihydrolanosterol (DHL), producing 4,4-dimethyl-8,14-cholestadien-3-beta-ol, but at lower rates than the endogenous substrates. The chain is Lanosterol 14-alpha demethylase (CYP51) from Cunninghamella elegans.